The primary structure comprises 338 residues: 4-hydroxy-3-methylbut-2-enyl diphosphate reductase (338 aa).

Position 21 (Cys-21) interacts with [4Fe-4S] cluster. 2 residues coordinate (2E)-4-hydroxy-3-methylbut-2-enyl diphosphate: His-50 and His-83. The dimethylallyl diphosphate site is built by His-50 and His-83. Positions 50 and 83 each coordinate isopentenyl diphosphate. A [4Fe-4S] cluster-binding site is contributed by Cys-105. A (2E)-4-hydroxy-3-methylbut-2-enyl diphosphate-binding site is contributed by His-133. A dimethylallyl diphosphate-binding site is contributed by His-133. An isopentenyl diphosphate-binding site is contributed by His-133. Catalysis depends on Glu-135, which acts as the Proton donor. Position 173 (Thr-173) interacts with (2E)-4-hydroxy-3-methylbut-2-enyl diphosphate. Cys-203 is a binding site for [4Fe-4S] cluster. (2E)-4-hydroxy-3-methylbut-2-enyl diphosphate-binding residues include Ser-231, Ser-232, Asn-233, and Ser-276. Residues Ser-231, Ser-232, Asn-233, and Ser-276 each contribute to the dimethylallyl diphosphate site. Isopentenyl diphosphate is bound by residues Ser-231, Ser-232, Asn-233, and Ser-276.

The protein belongs to the IspH family. The cofactor is [4Fe-4S] cluster.

It carries out the reaction isopentenyl diphosphate + 2 oxidized [2Fe-2S]-[ferredoxin] + H2O = (2E)-4-hydroxy-3-methylbut-2-enyl diphosphate + 2 reduced [2Fe-2S]-[ferredoxin] + 2 H(+). The enzyme catalyses dimethylallyl diphosphate + 2 oxidized [2Fe-2S]-[ferredoxin] + H2O = (2E)-4-hydroxy-3-methylbut-2-enyl diphosphate + 2 reduced [2Fe-2S]-[ferredoxin] + 2 H(+). It participates in isoprenoid biosynthesis; dimethylallyl diphosphate biosynthesis; dimethylallyl diphosphate from (2E)-4-hydroxy-3-methylbutenyl diphosphate: step 1/1. Its pathway is isoprenoid biosynthesis; isopentenyl diphosphate biosynthesis via DXP pathway; isopentenyl diphosphate from 1-deoxy-D-xylulose 5-phosphate: step 6/6. Its function is as follows. Catalyzes the conversion of 1-hydroxy-2-methyl-2-(E)-butenyl 4-diphosphate (HMBPP) into a mixture of isopentenyl diphosphate (IPP) and dimethylallyl diphosphate (DMAPP). Acts in the terminal step of the DOXP/MEP pathway for isoprenoid precursor biosynthesis. The polypeptide is 4-hydroxy-3-methylbut-2-enyl diphosphate reductase (Streptomyces coelicolor (strain ATCC BAA-471 / A3(2) / M145)).